A 479-amino-acid chain; its full sequence is UDP-N-acetylmuramate--L-alanine ligase (479 aa).

Residue 124-130 (GSHGKTT) coordinates ATP.

This sequence belongs to the MurCDEF family.

Its subcellular location is the cytoplasm. It carries out the reaction UDP-N-acetyl-alpha-D-muramate + L-alanine + ATP = UDP-N-acetyl-alpha-D-muramoyl-L-alanine + ADP + phosphate + H(+). Its pathway is cell wall biogenesis; peptidoglycan biosynthesis. Cell wall formation. In Synechococcus sp. (strain RCC307), this protein is UDP-N-acetylmuramate--L-alanine ligase.